The sequence spans 284 residues: Cell division protein DivIB (284 aa).

The span at 1–10 (MAWLRKKEQQ) shows a compositional bias: basic and acidic residues. The segment at 1–38 (MAWLRKKEQQSDPLTPWQQYQARQQQTPRHDRRQKPKL) is disordered. Residues 1–56 (MAWLRKKEQQSDPLTPWQQYQARQQQTPRHDRRQKPKLDVNLPKIQTLRRRKLVKN) are Cytoplasmic-facing. The helical transmembrane segment at 57 to 77 (LVLILLPLLLLLGVFGYFASP) threads the bilayer. Over 78-284 (LSKVGLVSVQ…YSSSEKSSND (207 aa)) the chain is Extracellular. The 72-residue stretch at 79 to 150 (SKVGLVSVQG…NRIIIKTSEY (72 aa)) folds into the POTRA domain.

Belongs to the FtsQ/DivIB family. DivIB subfamily.

The protein localises to the cell membrane. Functionally, cell division protein that may be involved in stabilizing or promoting the assembly of the division complex. The sequence is that of Cell division protein DivIB from Lacticaseibacillus rhamnosus (strain ATCC 53103 / LMG 18243 / GG) (Lactobacillus rhamnosus).